Here is a 185-residue protein sequence, read N- to C-terminus: Pyridoxal 5'-phosphate synthase subunit PdxT (185 aa).

46-48 provides a ligand contact to L-glutamine; that stretch reads GES. The active-site Nucleophile is C75. Residues R101 and 129-130 contribute to the L-glutamine site; that span reads IR. Catalysis depends on charge relay system residues H165 and E167.

This sequence belongs to the glutaminase PdxT/SNO family. In terms of assembly, in the presence of PdxS, forms a dodecamer of heterodimers. Only shows activity in the heterodimer.

It carries out the reaction aldehydo-D-ribose 5-phosphate + D-glyceraldehyde 3-phosphate + L-glutamine = pyridoxal 5'-phosphate + L-glutamate + phosphate + 3 H2O + H(+). The enzyme catalyses L-glutamine + H2O = L-glutamate + NH4(+). It functions in the pathway cofactor biosynthesis; pyridoxal 5'-phosphate biosynthesis. In terms of biological role, catalyzes the hydrolysis of glutamine to glutamate and ammonia as part of the biosynthesis of pyridoxal 5'-phosphate. The resulting ammonia molecule is channeled to the active site of PdxS. The chain is Pyridoxal 5'-phosphate synthase subunit PdxT from Staphylococcus epidermidis (strain ATCC 12228 / FDA PCI 1200).